The following is a 262-amino-acid chain: Snake venom serine protease catroxase-1 (262 aa).

The N-terminal stretch at 1–18 (MVLIRVLANLLILQLSYA) is a signal peptide. Residues 19 to 24 (QKSSEP) constitute a propeptide that is removed on maturation. The region spanning 25–250 (IIGGDECNRN…HLDWIQSIIA (226 aa)) is the Peptidase S1 domain. 6 disulfides stabilise this stretch: Cys31-Cys162, Cys49-Cys65, Cys97-Cys257, Cys141-Cys211, Cys173-Cys190, and Cys201-Cys226. The active-site Charge relay system is the His64. Asn102 is a glycosylation site (N-linked (GlcNAc...) asparagine). Asp109 (charge relay system) is an active-site residue. Asn169 carries an N-linked (GlcNAc...) asparagine glycan. Ser205 serves as the catalytic Charge relay system.

This sequence belongs to the peptidase S1 family. Snake venom subfamily. Monomer. As to expression, expressed by the venom gland.

The protein resides in the secreted. Snake venom serine protease that may act in the hemostasis system of the prey. In Crotalus atrox (Western diamondback rattlesnake), this protein is Snake venom serine protease catroxase-1.